Consider the following 418-residue polypeptide: Actin-related protein 3 (418 aa).

The protein belongs to the actin family. ARP3 subfamily. Component of the Arp2/3 complex.

Its subcellular location is the cytoplasm. It is found in the cytoskeleton. Functions as ATP-binding component of the Arp2/3 complex which is involved in regulation of actin polymerization and together with an activating nucleation-promoting factor (NPF) mediates the formation of branched actin networks. Seems to contact the pointed end of the daughter actin filament. Required during embryogenesis for the developmental migration of tail hemocytes anteriorly, along the ventral midline. The protein is Actin-related protein 3 of Drosophila melanogaster (Fruit fly).